Here is a 150-residue protein sequence, read N- to C-terminus: Ribonuclease H (150 aa).

An RNase H type-1 domain is found at 7–148 (ESNIVEIWTD…ADQLATKARM (142 aa)). Mg(2+) is bound by residues D16, E54, D76, and D140.

The protein belongs to the RNase H family. As to quaternary structure, monomer. Mg(2+) serves as cofactor.

Its subcellular location is the cytoplasm. It carries out the reaction Endonucleolytic cleavage to 5'-phosphomonoester.. Its function is as follows. Endonuclease that specifically degrades the RNA of RNA-DNA hybrids. In Granulibacter bethesdensis (strain ATCC BAA-1260 / CGDNIH1), this protein is Ribonuclease H.